Reading from the N-terminus, the 1115-residue chain is DNA-directed RNA polymerase subunit beta (1115 aa).

A disordered region spans residues His1084 to Glu1115. The span at Glu1088–Glu1115 shows a compositional bias: acidic residues.

Belongs to the RNA polymerase beta chain family. The RNAP catalytic core consists of 2 alpha, 1 beta, 1 beta' and 1 omega subunit. When a sigma factor is associated with the core the holoenzyme is formed, which can initiate transcription.

It carries out the reaction RNA(n) + a ribonucleoside 5'-triphosphate = RNA(n+1) + diphosphate. DNA-dependent RNA polymerase catalyzes the transcription of DNA into RNA using the four ribonucleoside triphosphates as substrates. In Desulfitobacterium hafniense (strain DSM 10664 / DCB-2), this protein is DNA-directed RNA polymerase subunit beta.